The following is a 242-amino-acid chain: Phosducin-like protein 2 (242 aa).

In terms of domain architecture, Phosducin spans 34–201 (VLRLQKEAMV…LEWKLAEVGA (168 aa)). Residues 89–242 (FGELREISGN…SSNSDSEDTK (154 aa)) form a thioredoxin fold region.

It belongs to the phosducin family. In terms of assembly, interacts with the CCT chaperonin complex and actin.

The protein localises to the endoplasmic reticulum. Essential for male fertility, spermiogenesis and acrosome formation. The sequence is that of Phosducin-like protein 2 (PDCL2) from Bos taurus (Bovine).